The chain runs to 250 residues: Putative ankyrin repeat protein RBE_0623 (250 aa).

ANK repeat units lie at residues 70 to 99 (IGDS…EPNT), 104 to 134 (NCYT…NINE), and 137 to 166 (GKET…PDKF).

This chain is Putative ankyrin repeat protein RBE_0623, found in Rickettsia bellii (strain RML369-C).